A 335-amino-acid polypeptide reads, in one-letter code: Tryptophan--tRNA ligase (335 aa).

ATP is bound by residues 19-21 (QPS) and 28-29 (GN). The short motif at 20–29 (PSSGMLHLGN) is the 'HIGH' region element. Position 143 (aspartate 143) interacts with L-tryptophan. ATP contacts are provided by residues 155 to 157 (GAD), isoleucine 192, and 201 to 205 (KMSKS). A 'KMSKS' region motif is present at residues 201–205 (KMSKS).

The protein belongs to the class-I aminoacyl-tRNA synthetase family. In terms of assembly, homodimer.

It is found in the cytoplasm. The catalysed reaction is tRNA(Trp) + L-tryptophan + ATP = L-tryptophyl-tRNA(Trp) + AMP + diphosphate + H(+). Its function is as follows. Catalyzes the attachment of tryptophan to tRNA(Trp). In Tropheryma whipplei (strain Twist) (Whipple's bacillus), this protein is Tryptophan--tRNA ligase.